The following is a 256-amino-acid chain: 14-3-3-like protein GF14-C (256 aa).

The protein belongs to the 14-3-3 family. May form a complex with the transcriptional activator VP1 and the bZIP transcription factor EMBP1. As to expression, expressed in seedlings, internodes and panicles.

The protein localises to the cytoplasm. The protein resides in the nucleus. In terms of biological role, is associated with a DNA binding complex that binds to the G box, a well-characterized cis-acting DNA regulatory element found in plant genes. In Oryza sativa subsp. japonica (Rice), this protein is 14-3-3-like protein GF14-C (GF14C).